The chain runs to 717 residues: Polyribonucleotide nucleotidyltransferase (717 aa).

Mg(2+) contacts are provided by Asp-486 and Asp-492. Residues 553 to 612 (PKIIQLQIDIDKISLVIGSTGKTVKAITDEFEVRVQIEQDGRITLFGTDSLKMQKAKARI) enclose the KH domain. An S1 motif domain is found at 622 to 715 (GEIYEGVVKK…KFGKIELELV (94 aa)). The disordered stretch occupies residues 650–683 (SNRPKSRDDRYGDMRHSRYGSGRHSRYGRDSRNT). A compositionally biased stretch (basic and acidic residues) spans 654–665 (KSRDDRYGDMRH). Residues 666–675 (SRYGSGRHSR) are compositionally biased toward basic residues.

This sequence belongs to the polyribonucleotide nucleotidyltransferase family. Requires Mg(2+) as cofactor.

Its subcellular location is the cytoplasm. It carries out the reaction RNA(n+1) + phosphate = RNA(n) + a ribonucleoside 5'-diphosphate. Functionally, involved in mRNA degradation. Catalyzes the phosphorolysis of single-stranded polyribonucleotides processively in the 3'- to 5'-direction. In Borrelia turicatae (strain 91E135), this protein is Polyribonucleotide nucleotidyltransferase.